A 421-amino-acid polypeptide reads, in one-letter code: UDP-N-acetylglucosamine 1-carboxyvinyltransferase (421 aa).

Phosphoenolpyruvate is bound at residue 22 to 23 (KN). Arg-93 contributes to the UDP-N-acetyl-alpha-D-glucosamine binding site. Cys-117 (proton donor) is an active-site residue. Cys-117 carries the post-translational modification 2-(S-cysteinyl)pyruvic acid O-phosphothioketal. Residues 122 to 126 (RPVDL), Asp-308, and Ile-330 contribute to the UDP-N-acetyl-alpha-D-glucosamine site.

This sequence belongs to the EPSP synthase family. MurA subfamily.

The protein resides in the cytoplasm. It carries out the reaction phosphoenolpyruvate + UDP-N-acetyl-alpha-D-glucosamine = UDP-N-acetyl-3-O-(1-carboxyvinyl)-alpha-D-glucosamine + phosphate. It functions in the pathway cell wall biogenesis; peptidoglycan biosynthesis. Functionally, cell wall formation. Adds enolpyruvyl to UDP-N-acetylglucosamine. In Pseudomonas fluorescens (strain ATCC BAA-477 / NRRL B-23932 / Pf-5), this protein is UDP-N-acetylglucosamine 1-carboxyvinyltransferase.